Consider the following 156-residue polypeptide: Small ribosomal subunit protein uS7 (156 aa).

It belongs to the universal ribosomal protein uS7 family. As to quaternary structure, part of the 30S ribosomal subunit. Contacts proteins S9 and S11.

Its function is as follows. One of the primary rRNA binding proteins, it binds directly to 16S rRNA where it nucleates assembly of the head domain of the 30S subunit. Is located at the subunit interface close to the decoding center, probably blocks exit of the E-site tRNA. In Synechococcus sp. (strain JA-2-3B'a(2-13)) (Cyanobacteria bacterium Yellowstone B-Prime), this protein is Small ribosomal subunit protein uS7.